Consider the following 287-residue polypeptide: Proteasome assembly chaperone 1 (287 aa).

The interval 1 to 32 (MATFFGEVQSVFSRAVDEDDEEEEGEEEEEDR) is disordered. Residues 17–32 (DEDDEEEEGEEEEEDR) show a composition bias toward acidic residues.

This sequence belongs to the PSMG1 family. Forms a heterodimer with psmg2. Post-translationally, degraded by the proteasome upon completion of 20S proteasome maturation.

It localises to the cytoplasm. Its subcellular location is the endoplasmic reticulum. Its function is as follows. Chaperone protein which promotes assembly of the 20S proteasome as part of a heterodimer with psmg2. In Xenopus tropicalis (Western clawed frog), this protein is Proteasome assembly chaperone 1.